The sequence spans 469 residues: Glutamate--tRNA ligase (469 aa).

Residues 11–21 carry the 'HIGH' region motif; that stretch reads PSPTGFIHLGN. Basic and acidic residues predominate over residues 118–131; it reads GEKPRYDGTWRPEP. The segment at 118 to 138 is disordered; the sequence is GEKPRYDGTWRPEPGKVLPEP. A 'KMSKS' region motif is present at residues 243–247; the sequence is KMSKR. ATP is bound at residue K246.

This sequence belongs to the class-I aminoacyl-tRNA synthetase family. Glutamate--tRNA ligase type 1 subfamily. In terms of assembly, monomer.

The protein localises to the cytoplasm. The catalysed reaction is tRNA(Glu) + L-glutamate + ATP = L-glutamyl-tRNA(Glu) + AMP + diphosphate. Functionally, catalyzes the attachment of glutamate to tRNA(Glu) in a two-step reaction: glutamate is first activated by ATP to form Glu-AMP and then transferred to the acceptor end of tRNA(Glu). This Burkholderia thailandensis (strain ATCC 700388 / DSM 13276 / CCUG 48851 / CIP 106301 / E264) protein is Glutamate--tRNA ligase.